The primary structure comprises 792 residues: Phenylalanine--tRNA ligase beta subunit (792 aa).

The region spanning 39-147 (GESLGQVVVA…DDAPVGQALA (109 aa)) is the tRNA-binding domain. Positions 400–475 (PQPARILLRR…RIHGYDRVPT (76 aa)) constitute a B5 domain. Mg(2+)-binding residues include Asp453, Asp459, Glu462, and Asp463. In terms of domain architecture, FDX-ACB spans 698–791 (SRFPSVRRDL…IEREHRARIR (94 aa)).

This sequence belongs to the phenylalanyl-tRNA synthetase beta subunit family. Type 1 subfamily. In terms of assembly, tetramer of two alpha and two beta subunits. It depends on Mg(2+) as a cofactor.

Its subcellular location is the cytoplasm. The catalysed reaction is tRNA(Phe) + L-phenylalanine + ATP = L-phenylalanyl-tRNA(Phe) + AMP + diphosphate + H(+). This Xanthomonas oryzae pv. oryzae (strain KACC10331 / KXO85) protein is Phenylalanine--tRNA ligase beta subunit.